A 631-amino-acid polypeptide reads, in one-letter code: Chaperone protein HtpG (631 aa).

The tract at residues 1-339 (MSAQKETLGF…SNDLPLNVSR (339 aa)) is a; substrate-binding. Residues 340–556 (EILQESKDID…EHDMSAHLER (217 aa)) are b. Positions 557–631 (MLKAAGQKIE…INKLMLELSV (75 aa)) are c.

The protein belongs to the heat shock protein 90 family. Homodimer.

The protein localises to the cytoplasm. Its function is as follows. Molecular chaperone. Has ATPase activity. This is Chaperone protein HtpG from Chromobacterium violaceum (strain ATCC 12472 / DSM 30191 / JCM 1249 / CCUG 213 / NBRC 12614 / NCIMB 9131 / NCTC 9757 / MK).